The primary structure comprises 122 residues: Glycine cleavage system H protein (122 aa).

The Lipoyl-binding domain maps to 19 to 101; sequence VVTVGITNYA…EKEGWLWKMT (83 aa). The residue at position 60 (K60) is an N6-lipoyllysine.

Belongs to the GcvH family. The glycine cleavage system is composed of four proteins: P, T, L and H. The cofactor is (R)-lipoate.

Its function is as follows. The glycine cleavage system catalyzes the degradation of glycine. The H protein shuttles the methylamine group of glycine from the P protein to the T protein. This chain is Glycine cleavage system H protein, found in Bartonella quintana (strain Toulouse) (Rochalimaea quintana).